The following is a 322-amino-acid chain: Malate dehydrogenase (322 aa).

NAD(+) is bound by residues 10–15 (GSGQIG) and Asp-34. The substrate site is built by Arg-83 and Arg-89. NAD(+)-binding positions include Asn-96 and 119–121 (ITN). Substrate contacts are provided by Asn-121 and Arg-152. His-176 (proton acceptor) is an active-site residue.

Belongs to the LDH/MDH superfamily. MDH type 3 family.

The enzyme catalyses (S)-malate + NAD(+) = oxaloacetate + NADH + H(+). In terms of biological role, catalyzes the reversible oxidation of malate to oxaloacetate. The protein is Malate dehydrogenase of Nitrobacter hamburgensis (strain DSM 10229 / NCIMB 13809 / X14).